The primary structure comprises 78 residues: Exodeoxyribonuclease 7 small subunit (78 aa).

It belongs to the XseB family. Heterooligomer composed of large and small subunits.

Its subcellular location is the cytoplasm. The enzyme catalyses Exonucleolytic cleavage in either 5'- to 3'- or 3'- to 5'-direction to yield nucleoside 5'-phosphates.. Functionally, bidirectionally degrades single-stranded DNA into large acid-insoluble oligonucleotides, which are then degraded further into small acid-soluble oligonucleotides. This Actinobacillus succinogenes (strain ATCC 55618 / DSM 22257 / CCUG 43843 / 130Z) protein is Exodeoxyribonuclease 7 small subunit.